The primary structure comprises 92 residues: Small ribosomal subunit protein uS19 (92 aa).

This sequence belongs to the universal ribosomal protein uS19 family.

Protein S19 forms a complex with S13 that binds strongly to the 16S ribosomal RNA. This Bifidobacterium adolescentis (strain ATCC 15703 / DSM 20083 / NCTC 11814 / E194a) protein is Small ribosomal subunit protein uS19.